Reading from the N-terminus, the 2812-residue chain is Zonadhesin (2812 aa).

Positions 1–17 are cleaved as a signal peptide; sequence MVPPVWTLLLLVGAALF. Residues 18 to 2757 are Extracellular-facing; the sequence is RKEKPPDQKL…DAPPPRKPAS (2740 aa). 3 MAM domains span residues 39–204, 209–368, and 371–536; these read TQCD…SCNR, QTCS…PCGE, and PQCD…TCPV. A disordered region spans residues 61 to 84; the sequence is EDWVRASGPSPTGSTGAPGGYPNG. Positions 66–75 are enriched in low complexity; that stretch reads ASGPSPTGST. Asparagine 333 and asparagine 493 each carry an N-linked (GlcNAc...) asparagine glycan. Disordered stretches follow at residues 545–884 and 904–929; these read VSPV…PTEK and EKPT…KPTI. Over residues 547–558 the composition is skewed to low complexity; the sequence is PVSSTGPSETTG. A compositionally biased stretch (polar residues) spans 559-570; sequence LTENPTISTKKP. Residues 573–1041 form a 66 X heptapeptide repeats (approximate) (mucin-like domain) region; the sequence is SIEKPSVTTE…GTTTTSRSST (469 aa). 5 stretches are compositionally biased toward low complexity: residues 592–603, 651–675, 713–842, 853–868, and 916–929; these read TIPTEKPTISTE, TEKP…MEEP, SPEK…STEK, STEK…TISP, and STEK…KPTI. In terms of domain architecture, TIL 1 spans 1044–1093; sequence CPPNARYESCACPASCKSPRPSCGPLCREGCVCNPGFLFSDNHCIQASSC. Residues 1103–1148 enclose the VWFC 1 domain; that stretch reads EPGAEWFSPNCTEHCRCWPGSRVECQISQCGTHTVCQLKNGQYGCH. N-linked (GlcNAc...) asparagine glycans are attached at residues asparagine 1112 and asparagine 1188. Positions 1154–1331 constitute a VWFD 1 domain; the sequence is ATCLVYGDPH…TDQDEDQECQ (178 aa). 2 disulfides stabilise this stretch: cysteine 1156–cysteine 1291 and cysteine 1178–cysteine 1330. Residues 1302–1316 show a composition bias toward basic and acidic residues; that stretch reads HLKLDGSPAGDKEEL. Residues 1302–1323 form a disordered region; the sequence is HLKLDGSPAGDKEELGNSWQTD. The TIL 2 domain maps to 1426–1479; that stretch reads CPPNSKYSLCAKPCPDTCHSGFSGMFCSDRCVEACECNPGFVLSGLECIPRSQC. A VWFC 2 domain is found at 1480–1535; that stretch reads GCLHPAGSYFKVGERWYKPGCKELCVCESNNRIRCQPWRCRAQEFCGQQDGIYGCH. The 181-residue stretch at 1540 to 1720 folds into the VWFD 2 domain; it reads ATCTASGDPH…LPESSEPGCF (181 aa). 2 cysteine pairs are disulfide-bonded: cysteine 1542/cysteine 1680 and cysteine 1564/cysteine 1719. N-linked (GlcNAc...) asparagine glycans are attached at residues asparagine 1685 and asparagine 1804. Positions 1812 to 1867 constitute a TIL 3 domain; sequence CPPGSSYSPCSSPCPDTCSSINNPRDCPKALPCAESCECQKGHILSGTSCVPLGQC. Residues 1868–1924 form the VWFC 3 domain; sequence GCTDPAGSYHPVGERWYTENTCTRLCTCSVHNNITCFQSTCKPNQICWALDGLLHCR. 2 N-linked (GlcNAc...) asparagine glycosylation sites follow: asparagine 1900 and asparagine 1946. The 180-residue stretch at 1929 to 2108 folds into the VWFD 3 domain; the sequence is GVCQLPGESH…KDKDIDPSCQ (180 aa). 2 disulfide bridges follow: cysteine 1931–cysteine 2069 and cysteine 1953–cysteine 2107. Asparagine 2203 carries an N-linked (GlcNAc...) asparagine glycan. The region spanning 2211–2267 is the TIL 4 domain; the sequence is CPAYSSYTNCLPSCSPSCWDLDGRCEGAKVPSACAEGCICQPGYVLSEDKCVPRSQC. The VWFC 4 domain maps to 2268–2329; sequence GCKDAHGGSI…NSNCVSDKSE (62 aa). In terms of domain architecture, VWFD 4 spans 2329-2505; that stretch reads EQCSVYGDPR…SWEVKTEDAL (177 aa). Cysteine 2331 and cysteine 2468 form a disulfide bridge. N-linked (GlcNAc...) asparagine glycosylation is found at asparagine 2542 and asparagine 2701. Residues 2652 to 2797 enclose the VWFC 5 domain; that stretch reads CGCTSNGIYY…KREKTQEGDR (146 aa). Residues 2708–2744 form the EGF-like domain; it reads PESPCLQNPCQNDGQCREQGATFTCECEVGYGGGLCM. Disulfide bonds link cysteine 2712–cysteine 2723, cysteine 2717–cysteine 2732, and cysteine 2734–cysteine 2743. Residues 2758–2778 form a helical membrane-spanning segment; it reads NLVGVLLGLLVPVVVVLLAVT. Residues 2779-2812 are Cytoplasmic-facing; sequence RECIYRTRRKREKTQEGDRLARLVDTDTVLDCAC.

Probably forms covalent oligomers. In testis, primarily in haploid spermatids.

Its subcellular location is the cell membrane. In terms of biological role, binds in a species-specific manner to the zona pellucida of the egg. May be involved in gamete recognition and/or signaling. In Homo sapiens (Human), this protein is Zonadhesin (ZAN).